We begin with the raw amino-acid sequence, 769 residues long: Polymeric immunoglobulin receptor (769 aa).

Residues 1–18 form the signal peptide; it reads MRLSLFALLVTVFSGVST. At 19–643 the chain is on the extracellular side; that stretch reads QSPIFGPQDV…SAGGQSGSSK (625 aa). The Ig-like V-type 1; required for binding to polymeric IgA and IgM domain maps to 21 to 126; it reads PIFGPQDVSS…RGLFFDVSLE (106 aa). An intrachain disulfide couples cysteine 40 to cysteine 110. 3 N-linked (GlcNAc...) asparagine glycosylation sites follow: asparagine 90, asparagine 135, and asparagine 206. Ig-like V-type domains lie at 135–237, 240–341, 353–457, and 463–563; these read NDTH…DLQV, PEPE…VQAW, NSRS…LQVA, and PDLE…IYVA. 3 cysteine pairs are disulfide-bonded: cysteine 152–cysteine 220, cysteine 257–cysteine 324, and cysteine 370–cysteine 440. A glycan (N-linked (GlcNAc...) asparagine) is linked at asparagine 471. Residues cysteine 484 and cysteine 546 are joined by a disulfide bond. Disordered stretches follow at residues 569 to 604 and 619 to 640; these read RGSPHINPTDANARAKDAPEEEAMESSVREDENKAN and AGDQAQENRASGNAGSAGGQSG. Basic and acidic residues predominate over residues 595-604; it reads SVREDENKAN. Residues 644–666 form a helical membrane-spanning segment; that stretch reads VLFSTLVPLGLVLAVGAVAVWVA. At 667–769 the chain is on the cytoplasmic side; the sequence is RVRHRKNVDR…AQVHDGPQEA (103 aa). A phosphoserine mark is found at serine 678, serine 687, serine 694, and serine 740. A disordered region spans residues 719–741; the sequence is EIETTTECTTEPEESKKAKRSSK. Basic and acidic residues predominate over residues 731-741; it reads EESKKAKRSSK.

As to quaternary structure, interacts (mainly via CDR1-like domain) with dimeric IgA. Interacts (mainly via CDR2-like domain) with pentameric IgM. Either free or part of the secretory IgA (sIgA) complex that consists of two, four or five IgA monomers, and two additional non-Ig polypeptides, namely the JCHAIN and the secretory component (the proteolytic product of PIGR). Free secretory component interacts with bacterial antigens toxA of C.difficile and eae of E.coli. N-glycosylated. N-glycosylation is required for anchoring IgA molecules to mucus, but is not necessary for Ig binding.

It is found in the cell membrane. It localises to the secreted. Functionally, mediates selective transcytosis of polymeric IgA and IgM across mucosal epithelial cells. Binds polymeric IgA and IgM at the basolateral surface of epithelial cells. The complex is then transported across the cell to be secreted at the apical surface. During this process, a cleavage occurs that separates the extracellular (known as the secretory component) from the transmembrane segment. In terms of biological role, through its N-linked glycans ensures anchoring of secretory IgA (sIgA) molecules to mucus lining the epithelial surface to neutralize extracellular pathogens. On its own (free form) may act as a non-specific microbial scavenger to prevent pathogen interaction with epithelial cells. The polypeptide is Polymeric immunoglobulin receptor (Pigr) (Rattus norvegicus (Rat)).